Reading from the N-terminus, the 164-residue chain is S-ribosylhomocysteine lyase (164 aa).

Fe cation is bound by residues H54, H58, and C128.

It belongs to the LuxS family. Homodimer. Fe cation is required as a cofactor.

The enzyme catalyses S-(5-deoxy-D-ribos-5-yl)-L-homocysteine = (S)-4,5-dihydroxypentane-2,3-dione + L-homocysteine. Its function is as follows. Involved in the synthesis of autoinducer 2 (AI-2) which is secreted by bacteria and is used to communicate both the cell density and the metabolic potential of the environment. The regulation of gene expression in response to changes in cell density is called quorum sensing. Catalyzes the transformation of S-ribosylhomocysteine (RHC) to homocysteine (HC) and 4,5-dihydroxy-2,3-pentadione (DPD). The protein is S-ribosylhomocysteine lyase of Campylobacter jejuni subsp. doylei (strain ATCC BAA-1458 / RM4099 / 269.97).